Here is a 96-residue protein sequence, read N- to C-terminus: Beta-defensin 20 (96 aa).

Positions 1–21 (MKLPQLLLILLFVVLADSVQP) are cleaved as a signal peptide. Intrachain disulfides connect C24/C52, C32/C46, and C36/C53.

The protein belongs to the beta-defensin family.

The protein resides in the secreted. Has antibacterial activity. The polypeptide is Beta-defensin 20 (Defb20) (Rattus norvegicus (Rat)).